Consider the following 512-residue polypeptide: Sodium/proline symporter (512 aa).

13 consecutive transmembrane segments (helical) span residues 16 to 36 (WQTY…GFYG), 54 to 74 (IGPY…WMIM), 85 to 105 (LSAM…YFVV), 139 to 159 (IISG…GFVS), 174 to 194 (FGLI…GYLA), 200 to 220 (FFQG…AMMN), 240 to 260 (LFKG…LGYF), 286 to 306 (ISWM…GIAF), 327 to 347 (VLFH…AIMS), 381 to 401 (FVMI…AIAW), 410 to 430 (LVGN…LFAL), 438 to 458 (AGAV…IAWI), and 467 to 487 (IFGL…TYVV).

This sequence belongs to the sodium:solute symporter (SSF) (TC 2.A.21) family.

Its subcellular location is the cell membrane. The enzyme catalyses L-proline(in) + Na(+)(in) = L-proline(out) + Na(+)(out). In terms of biological role, catalyzes the sodium-dependent uptake of extracellular L-proline. Since most S.aureus strains are L-proline auxotrophs, this transporter may aid the bacterial persistence during an infection of tissues with low proline concentrations. The sequence is that of Sodium/proline symporter (putP) from Staphylococcus aureus (strain bovine RF122 / ET3-1).